The sequence spans 73 residues: MMSSIAAPKLKEKVEKFLSGKKKMYINGSFVESASGKTFDTPNPATGERLATVYEGDAEDIDRAVKAAREAFD.

Belongs to the aldehyde dehydrogenase family.

The enzyme catalyses an aldehyde + NAD(+) + H2O = a carboxylate + NADH + 2 H(+). The protein operates within alcohol metabolism; ethanol degradation; acetate from ethanol: step 2/2. The protein is Aldehyde dehydrogenase of Geobacillus stearothermophilus (Bacillus stearothermophilus).